A 226-amino-acid polypeptide reads, in one-letter code: N-acetyltransferase family 8 member 2 (226 aa).

Helical transmembrane passes span 33–55 and 60–82; these read FYHV…TIIL and WLLA…WVSC. Residues 69–221 enclose the N-acetyltransferase domain; that stretch reads LFLLCLRLIF…FHFTYSLPSV (153 aa). K204 is subject to N6-acetyllysine.

The protein belongs to the camello family.

It is found in the membrane. In terms of biological role, probable acetyltransferase. Has no detectable histone acetyltransferase activity towards histone H3 or H4. The sequence is that of N-acetyltransferase family 8 member 2 from Rattus norvegicus (Rat).